The primary structure comprises 203 residues: Guanylate kinase (203 aa).

The 179-residue stretch at 3-181 folds into the Guanylate kinase-like domain; that stretch reads GTLYIVAAPS…AVSEMCAIFT (179 aa). 10-17 contributes to the ATP binding site; that stretch reads APSGAGKS.

Belongs to the guanylate kinase family.

The protein localises to the cytoplasm. It catalyses the reaction GMP + ATP = GDP + ADP. Its function is as follows. Essential for recycling GMP and indirectly, cGMP. This chain is Guanylate kinase, found in Xanthomonas axonopodis pv. citri (strain 306).